The following is a 286-amino-acid chain: Aquaporin NIP4-1 (286 aa).

2 consecutive transmembrane segments (helical) span residues 59–79 and 86–106; these read VMVEGLASFLVVFWSCVAALM and LTFPMVCLVVAMTVAFVLSWL. Positions 112–114 match the NPA 1 motif; it reads NPA. Transmembrane regions (helical) follow at residues 133–153, 173–193, and 201–221; these read LYVAAQLAGSLLACLSVNAVM, LPFLMEFLASAVLMIVIATVA, and TVGGIAIGAAVGGLGLVIGPV. The short motif at 227 to 229 is the NPA 2 element; that stretch reads NPA. The chain crosses the membrane as a helical span at residues 241–261; that stretch reads YDGVWIYVVAPVAGMLVGALC.

Belongs to the MIP/aquaporin (TC 1.A.8) family. NIP (TC 1.A.8.12) subfamily. In terms of tissue distribution, expressed in leaves and at lower levels in roots.

It localises to the membrane. Aquaporins facilitate the transport of water and small neutral solutes across cell membranes. In Oryza sativa subsp. japonica (Rice), this protein is Aquaporin NIP4-1 (NIP4-1).